Here is a 342-residue protein sequence, read N- to C-terminus: Farnesyl pyrophosphate synthase 2 (342 aa).

Isopentenyl diphosphate is bound by residues Lys48, Arg51, and Gln86. Positions 93 and 97 each coordinate Mg(2+). Arg102 serves as a coordination point for dimethylallyl diphosphate. Residue Arg103 coordinates isopentenyl diphosphate. Residues Lys190, Thr191, Gln229, Lys246, and Lys255 each contribute to the dimethylallyl diphosphate site.

It belongs to the FPP/GGPP synthase family. It depends on Mg(2+) as a cofactor.

Its subcellular location is the cytoplasm. The catalysed reaction is isopentenyl diphosphate + dimethylallyl diphosphate = (2E)-geranyl diphosphate + diphosphate. It carries out the reaction isopentenyl diphosphate + (2E)-geranyl diphosphate = (2E,6E)-farnesyl diphosphate + diphosphate. It participates in isoprenoid biosynthesis; farnesyl diphosphate biosynthesis; farnesyl diphosphate from geranyl diphosphate and isopentenyl diphosphate: step 1/1. The protein operates within isoprenoid biosynthesis; geranyl diphosphate biosynthesis; geranyl diphosphate from dimethylallyl diphosphate and isopentenyl diphosphate: step 1/1. Functionally, catalyzes the sequential condensation of isopentenyl pyrophosphate with the allylic pyrophosphates, dimethylallyl pyrophosphate, and then with the resultant geranylpyrophosphate to the ultimate product farnesyl pyrophosphate. The sequence is that of Farnesyl pyrophosphate synthase 2 (FPS2) from Parthenium argentatum (Guayule rubber plant).